Here is a 386-residue protein sequence, read N- to C-terminus: L-prolyl-[peptidyl-carrier protein] dehydrogenase (386 aa).

FAD contacts are provided by residues 125–134 and 158–160; these read NAATEPDAGS and FIT. Residue glutamate 244 is the Proton acceptor of the active site. Residues arginine 270, glutamine 281, 338 to 342, and 367 to 369 each bind FAD; these read QTFGG and TND.

This sequence belongs to the acyl-CoA dehydrogenase family. Requires FAD as cofactor.

The enzyme catalyses L-prolyl-[peptidyl-carrier protein] + 2 oxidized [electron-transfer flavoprotein] + H(+) = (1H-pyrrole-2-carbonyl)-[peptidyl-carrier protein] + 2 reduced [electron-transfer flavoprotein]. It participates in antibiotic biosynthesis; prodigiosin biosynthesis. Functionally, involved in the biosynthesis of 4-methoxy-2,2'-bipyrrole-5-carbaldehyde (MBC), one of the terminal products involved in the biosynthesis of the red antibiotic prodigiosin (Pig). Catalyzes the desaturation of the L-prolyl-[PigG] to yield 1H-pyrrole-2-carbonyl-[PigG]. The protein is L-prolyl-[peptidyl-carrier protein] dehydrogenase of Serratia sp. (strain ATCC 39006) (Prodigiosinella confusarubida).